The chain runs to 415 residues: Gamma-glutamyl phosphate reductase (415 aa).

Belongs to the gamma-glutamyl phosphate reductase family.

Its subcellular location is the cytoplasm. The catalysed reaction is L-glutamate 5-semialdehyde + phosphate + NADP(+) = L-glutamyl 5-phosphate + NADPH + H(+). The protein operates within amino-acid biosynthesis; L-proline biosynthesis; L-glutamate 5-semialdehyde from L-glutamate: step 2/2. Catalyzes the NADPH-dependent reduction of L-glutamate 5-phosphate into L-glutamate 5-semialdehyde and phosphate. The product spontaneously undergoes cyclization to form 1-pyrroline-5-carboxylate. The polypeptide is Gamma-glutamyl phosphate reductase (Listeria monocytogenes serovar 1/2a (strain ATCC BAA-679 / EGD-e)).